A 365-amino-acid chain; its full sequence is Uroporphyrinogen decarboxylase (365 aa).

The segment covering 1 to 17 (MSANDSPSGQQTTTSAS) has biased composition (polar residues). A disordered region spans residues 1–20 (MSANDSPSGQQTTTSASLDA). Substrate contacts are provided by residues 48–52 (RQAGR), D97, Y172, S227, and H341.

This sequence belongs to the uroporphyrinogen decarboxylase family. In terms of assembly, homodimer.

It localises to the cytoplasm. The enzyme catalyses uroporphyrinogen III + 4 H(+) = coproporphyrinogen III + 4 CO2. The protein operates within porphyrin-containing compound metabolism; protoporphyrin-IX biosynthesis; coproporphyrinogen-III from 5-aminolevulinate: step 4/4. Catalyzes the decarboxylation of four acetate groups of uroporphyrinogen-III to yield coproporphyrinogen-III. This chain is Uroporphyrinogen decarboxylase, found in Streptomyces griseus subsp. griseus (strain JCM 4626 / CBS 651.72 / NBRC 13350 / KCC S-0626 / ISP 5235).